A 327-amino-acid polypeptide reads, in one-letter code: Regulatory protein MsrR (327 aa).

Basic and acidic residues predominate over residues 1 to 18 (MDKETNDNEYRRQSEHRT). Residues 1-24 (MDKETNDNEYRRQSEHRTSAPKRK) form a disordered region. Topologically, residues 1–31 (MDKETNDNEYRRQSEHRTSAPKRKKKKKIRK) are cytoplasmic. A helical; Signal-anchor for type II membrane protein transmembrane segment spans residues 32 to 52 (LPIILLIVVILLIALVVYIVH). Residues 53-327 (SYNSGVEYAK…QAIKDFLDED (275 aa)) lie on the Extracellular side of the membrane.

The protein belongs to the LytR/CpsA/Psr (LCP) family.

It localises to the cell membrane. Its function is as follows. Involved in SarA attenuation. Affects resistance to oxacillin and teicoplanin, as well as the synthesis of virulence factors. The sequence is that of Regulatory protein MsrR (msrR) from Staphylococcus aureus (strain Mu50 / ATCC 700699).